The sequence spans 255 residues: Imidazole glycerol phosphate synthase subunit HisF (255 aa).

Catalysis depends on residues Asp-11 and Asp-130.

Belongs to the HisA/HisF family. As to quaternary structure, heterodimer of HisH and HisF.

It localises to the cytoplasm. It catalyses the reaction 5-[(5-phospho-1-deoxy-D-ribulos-1-ylimino)methylamino]-1-(5-phospho-beta-D-ribosyl)imidazole-4-carboxamide + L-glutamine = D-erythro-1-(imidazol-4-yl)glycerol 3-phosphate + 5-amino-1-(5-phospho-beta-D-ribosyl)imidazole-4-carboxamide + L-glutamate + H(+). It participates in amino-acid biosynthesis; L-histidine biosynthesis; L-histidine from 5-phospho-alpha-D-ribose 1-diphosphate: step 5/9. Its function is as follows. IGPS catalyzes the conversion of PRFAR and glutamine to IGP, AICAR and glutamate. The HisF subunit catalyzes the cyclization activity that produces IGP and AICAR from PRFAR using the ammonia provided by the HisH subunit. This is Imidazole glycerol phosphate synthase subunit HisF from Maricaulis maris (strain MCS10) (Caulobacter maris).